A 684-amino-acid polypeptide reads, in one-letter code: DNA-directed RNA polymerase subunit beta' (684 aa).

Residues cysteine 69, cysteine 71, cysteine 87, and cysteine 90 each contribute to the Zn(2+) site. Residues aspartate 489, aspartate 491, and aspartate 493 each coordinate Mg(2+).

Belongs to the RNA polymerase beta' chain family. RpoC1 subfamily. As to quaternary structure, in plastids the minimal PEP RNA polymerase catalytic core is composed of four subunits: alpha, beta, beta', and beta''. When a (nuclear-encoded) sigma factor is associated with the core the holoenzyme is formed, which can initiate transcription. Mg(2+) is required as a cofactor. The cofactor is Zn(2+).

It localises to the plastid. It is found in the chloroplast. The enzyme catalyses RNA(n) + a ribonucleoside 5'-triphosphate = RNA(n+1) + diphosphate. Functionally, DNA-dependent RNA polymerase catalyzes the transcription of DNA into RNA using the four ribonucleoside triphosphates as substrates. The sequence is that of DNA-directed RNA polymerase subunit beta' from Morus indica (Mulberry).